A 240-amino-acid polypeptide reads, in one-letter code: METPRYRRVILKLSGEALAGSQGFGIAHEMLVTVAEQVVEIQKLGVEVALVVGGGNIWRGIAGSKQGMDRANADYMGMLATVMNALALQDAMEKAGAATRVLSAIEMRQVAEPYIRRRAIRHLEKGRVVIFAAGTGNPYFSTDTTAALRAAEIEAEAILMAKRVDGVYDSDPLKNPEAKKYDRLTFLDVLSQGLGVMDSTAASLCMDNNIPLIVFDLNKKGNIRKGIMGESIGTYVGRDK.

Position 12–15 (Lys12–Gly15) interacts with ATP. The tract at residues Gly20–Gly25 is involved in allosteric activation by GTP. Gly54 lines the UMP pocket. Residues Gly55 and Arg59 each coordinate ATP. Residues Asp74 and Thr135–Thr142 contribute to the UMP site. Residues Tyr168 and Asp171 each contribute to the ATP site.

It belongs to the UMP kinase family. As to quaternary structure, homohexamer.

The protein localises to the cytoplasm. It catalyses the reaction UMP + ATP = UDP + ADP. It functions in the pathway pyrimidine metabolism; CTP biosynthesis via de novo pathway; UDP from UMP (UMPK route): step 1/1. With respect to regulation, allosterically activated by GTP. Inhibited by UTP. Its function is as follows. Catalyzes the reversible phosphorylation of UMP to UDP. This Desulfitobacterium hafniense (strain Y51) protein is Uridylate kinase.